A 166-amino-acid chain; its full sequence is Ubiquitin-conjugating enzyme E2 13 (166 aa).

In terms of domain architecture, UBC core spans 4–164 (QACLLLQKQL…VSRCVRKSQE (161 aa)). The active-site Glycyl thioester intermediate is Cys89.

It belongs to the ubiquitin-conjugating enzyme family.

The enzyme catalyses S-ubiquitinyl-[E1 ubiquitin-activating enzyme]-L-cysteine + [E2 ubiquitin-conjugating enzyme]-L-cysteine = [E1 ubiquitin-activating enzyme]-L-cysteine + S-ubiquitinyl-[E2 ubiquitin-conjugating enzyme]-L-cysteine.. The protein operates within protein modification; protein ubiquitination. In terms of biological role, accepts the ubiquitin from the E1 complex and catalyzes its covalent attachment to other proteins. Involved in the formation of multiubiquitin chains. Signal the protein for selective degradation. This chain is Ubiquitin-conjugating enzyme E2 13 (UBC13), found in Arabidopsis thaliana (Mouse-ear cress).